A 506-amino-acid polypeptide reads, in one-letter code: Cysteine--tRNA ligase (506 aa).

Position 34 (cysteine 34) interacts with Zn(2+). Residues 36–46 (PTVYDFAHIGN) carry the 'HIGH' region motif. Positions 230, 269, and 273 each coordinate Zn(2+). The 'KMSKS' region motif lies at 302–306 (KMSKS). Lysine 305 is an ATP binding site.

Belongs to the class-I aminoacyl-tRNA synthetase family. In terms of assembly, monomer. Zn(2+) serves as cofactor.

The protein resides in the cytoplasm. The enzyme catalyses tRNA(Cys) + L-cysteine + ATP = L-cysteinyl-tRNA(Cys) + AMP + diphosphate. This Brucella abortus (strain S19) protein is Cysteine--tRNA ligase.